The primary structure comprises 161 residues: 2-C-methyl-D-erythritol 2,4-cyclodiphosphate synthase (161 aa).

Asp-10 and His-12 together coordinate a divalent metal cation. Residues 10 to 12 (DVH) and 36 to 37 (HS) contribute to the 4-CDP-2-C-methyl-D-erythritol 2-phosphate site. Residue His-44 participates in a divalent metal cation binding. Residues 58–60 (DIG), 63–67 (FPDTD), 102–108 (AQAPKMA), 134–137 (TTTE), Phe-141, and Arg-144 each bind 4-CDP-2-C-methyl-D-erythritol 2-phosphate.

This sequence belongs to the IspF family. In terms of assembly, homotrimer. Requires a divalent metal cation as cofactor.

It carries out the reaction 4-CDP-2-C-methyl-D-erythritol 2-phosphate = 2-C-methyl-D-erythritol 2,4-cyclic diphosphate + CMP. The protein operates within isoprenoid biosynthesis; isopentenyl diphosphate biosynthesis via DXP pathway; isopentenyl diphosphate from 1-deoxy-D-xylulose 5-phosphate: step 4/6. Its function is as follows. Involved in the biosynthesis of isopentenyl diphosphate (IPP) and dimethylallyl diphosphate (DMAPP), two major building blocks of isoprenoid compounds. Catalyzes the conversion of 4-diphosphocytidyl-2-C-methyl-D-erythritol 2-phosphate (CDP-ME2P) to 2-C-methyl-D-erythritol 2,4-cyclodiphosphate (ME-CPP) with a corresponding release of cytidine 5-monophosphate (CMP). The protein is 2-C-methyl-D-erythritol 2,4-cyclodiphosphate synthase of Shewanella baltica (strain OS155 / ATCC BAA-1091).